A 322-amino-acid polypeptide reads, in one-letter code: Aspartate--ammonia ligase (322 aa).

Belongs to the class-II aminoacyl-tRNA synthetase family. AsnA subfamily.

Its subcellular location is the cytoplasm. The enzyme catalyses L-aspartate + NH4(+) + ATP = L-asparagine + AMP + diphosphate + H(+). The protein operates within amino-acid biosynthesis; L-asparagine biosynthesis; L-asparagine from L-aspartate (ammonia route): step 1/1. This Lactiplantibacillus plantarum (strain ATCC BAA-793 / NCIMB 8826 / WCFS1) (Lactobacillus plantarum) protein is Aspartate--ammonia ligase.